Consider the following 184-residue polypeptide: Endoribonuclease YbeY (184 aa).

Zn(2+) contacts are provided by His146, His150, and His156.

It belongs to the endoribonuclease YbeY family. The cofactor is Zn(2+).

It localises to the cytoplasm. Single strand-specific metallo-endoribonuclease involved in late-stage 70S ribosome quality control and in maturation of the 3' terminus of the 16S rRNA. The protein is Endoribonuclease YbeY of Nostoc sp. (strain PCC 7120 / SAG 25.82 / UTEX 2576).